The chain runs to 503 residues: Maturase K (503 aa).

This sequence belongs to the intron maturase 2 family. MatK subfamily.

Its subcellular location is the plastid. The protein resides in the chloroplast. In terms of biological role, usually encoded in the trnK tRNA gene intron. Probably assists in splicing its own and other chloroplast group II introns. The sequence is that of Maturase K from Vicia sativa (Spring vetch).